The primary structure comprises 339 residues: Cyclin-D1-1 (339 aa).

The protein belongs to the cyclin family. Cyclin D subfamily. As to quaternary structure, interacts with CDKA-1 and KRP6/ICK4. As to expression, expressed in roots, leaves and flowers.

Its function is as follows. May activate cell cycle in the root apical meristem (RAM) and promote embryonic root (radicle) protrusion. The protein is Cyclin-D1-1 (CYCD1-1) of Arabidopsis thaliana (Mouse-ear cress).